The following is a 298-amino-acid chain: Tyrosine recombinase XerC (298 aa).

The Core-binding (CB) domain occupies 2-88 (TDLHTDVERY…ALRSFFDWLV (87 aa)). One can recognise a Tyr recombinase domain in the interval 109–288 (HLPKNIDVDD…DFQHLASVYD (180 aa)). Catalysis depends on residues arginine 148, lysine 172, histidine 240, arginine 243, and histidine 266. The O-(3'-phospho-DNA)-tyrosine intermediate role is filled by tyrosine 275.

Belongs to the 'phage' integrase family. XerC subfamily. In terms of assembly, forms a cyclic heterotetrameric complex composed of two molecules of XerC and two molecules of XerD, in which XerC interacts with XerD via its C-terminal region, XerD interacts with XerC via its C-terminal region and so on.

It is found in the cytoplasm. Its activity is regulated as follows. FtsK may regulate the catalytic switch between XerC and XerD in the heterotetrameric complex during the two steps of the recombination process. Its function is as follows. Site-specific tyrosine recombinase, which acts by catalyzing the cutting and rejoining of the recombining DNA molecules. Binds cooperatively to specific DNA consensus sequences that are separated from XerD binding sites by a short central region, forming the heterotetrameric XerC-XerD complex that recombines DNA substrates. The complex is essential to convert dimers of the bacterial chromosome into monomers to permit their segregation at cell division. It also contributes to the segregational stability of plasmids. In the complex XerC specifically exchanges the top DNA strands. In Escherichia coli O157:H7, this protein is Tyrosine recombinase XerC.